Here is a 518-residue protein sequence, read N- to C-terminus: Chromosomal replication initiator protein DnaA (518 aa).

The tract at residues 1–72 (MTLAEFWPLC…VREELAAGRS (72 aa)) is domain I, interacts with DnaA modulators. The segment at 72–180 (SAFVFKPGEG…DAEEARYEQT (109 aa)) is domain II. Residues 145 to 178 (EPRQAAGSASRPESAAVAKARTDAQRDAEEARYE) form a disordered region. Residues 164-177 (ARTDAQRDAEEARY) show a composition bias toward basic and acidic residues. Residues 181–397 (NLSPDYTFDT…GAFNRVGASS (217 aa)) are domain III, AAA+ region. ATP contacts are provided by Gly225, Gly227, Lys228, and Thr229. Positions 398 to 518 (RFMNRPVIDI…YEKLLILIQN (121 aa)) are domain IV, binds dsDNA.

The protein belongs to the DnaA family. As to quaternary structure, oligomerizes as a right-handed, spiral filament on DNA at oriC.

Its subcellular location is the cytoplasm. Plays an essential role in the initiation and regulation of chromosomal replication. ATP-DnaA binds to the origin of replication (oriC) to initiate formation of the DNA replication initiation complex once per cell cycle. Binds the DnaA box (a 9 base pair repeat at the origin) and separates the double-stranded (ds)DNA. Forms a right-handed helical filament on oriC DNA; dsDNA binds to the exterior of the filament while single-stranded (ss)DNA is stabiized in the filament's interior. The ATP-DnaA-oriC complex binds and stabilizes one strand of the AT-rich DNA unwinding element (DUE), permitting loading of DNA polymerase. After initiation quickly degrades to an ADP-DnaA complex that is not apt for DNA replication. Binds acidic phospholipids. The protein is Chromosomal replication initiator protein DnaA of Neisseria meningitidis serogroup A / serotype 4A (strain DSM 15465 / Z2491).